The following is a 297-amino-acid chain: Homoserine kinase (297 aa).

ATP is bound at residue 82–92 (PVSRGLGSSAA).

It belongs to the GHMP kinase family. Homoserine kinase subfamily.

The protein localises to the cytoplasm. It carries out the reaction L-homoserine + ATP = O-phospho-L-homoserine + ADP + H(+). It participates in amino-acid biosynthesis; L-threonine biosynthesis; L-threonine from L-aspartate: step 4/5. Functionally, catalyzes the ATP-dependent phosphorylation of L-homoserine to L-homoserine phosphate. This is Homoserine kinase from Clostridium botulinum (strain ATCC 19397 / Type A).